The following is a 313-amino-acid chain: tRNA pseudouridine synthase B (313 aa).

Histidine 44 contacts substrate. The active-site Nucleophile is the aspartate 49. Tyrosine 77, tyrosine 180, and leucine 201 together coordinate substrate.

Belongs to the pseudouridine synthase TruB family. Type 1 subfamily.

It carries out the reaction uridine(55) in tRNA = pseudouridine(55) in tRNA. Responsible for synthesis of pseudouridine from uracil-55 in the psi GC loop of transfer RNAs. This chain is tRNA pseudouridine synthase B, found in Hamiltonella defensa subsp. Acyrthosiphon pisum (strain 5AT).